We begin with the raw amino-acid sequence, 331 residues long: Tyrosine--tRNA ligase (331 aa).

Positions 31, 155, 159, 162, and 177 each coordinate L-tyrosine. The 'KMSKS' region signature appears at 218 to 222 (KMSKS). Residue Lys-221 coordinates ATP.

It belongs to the class-I aminoacyl-tRNA synthetase family. TyrS type 4 subfamily. As to quaternary structure, homodimer.

The protein localises to the cytoplasm. It catalyses the reaction tRNA(Tyr) + L-tyrosine + ATP = L-tyrosyl-tRNA(Tyr) + AMP + diphosphate + H(+). Catalyzes the attachment of tyrosine to tRNA(Tyr) in a two-step reaction: tyrosine is first activated by ATP to form Tyr-AMP and then transferred to the acceptor end of tRNA(Tyr). The sequence is that of Tyrosine--tRNA ligase from Thermoplasma volcanium (strain ATCC 51530 / DSM 4299 / JCM 9571 / NBRC 15438 / GSS1).